Reading from the N-terminus, the 252-residue chain is uncharacterized protein (252 aa).

It belongs to the methyltransferase superfamily.

This is an uncharacterized protein from Mycobacterium sp. (strain KMS).